A 570-amino-acid polypeptide reads, in one-letter code: CRISPR-associated protein Cas8a1/Csx13 (570 aa).

2 disordered regions span residues 1-23 and 551-570; these read MACM…AGLR and GGEA…SEQS.

Belongs to the CRISPR-associated protein Cas8a1/Csx13 family. Myxan subtype subfamily.

In terms of biological role, CRISPR (clustered regularly interspaced short palindromic repeat) is an adaptive immune system that provides protection against mobile genetic elements (viruses, transposable elements and conjugative plasmids). CRISPR clusters contain spacers, sequences complementary to antecedent mobile elements, and target invading nucleic acids. CRISPR clusters are transcribed and processed into CRISPR RNA (crRNA). Functions in an unknown fashion to stimulate transcription of fruA independently of the intracellular A- and E-developmental signals. The protein is CRISPR-associated protein Cas8a1/Csx13 (devT) of Myxococcus xanthus (strain DK1622).